A 324-amino-acid chain; its full sequence is NADH-ubiquinone oxidoreductase chain 1 (324 aa).

8 helical membrane passes run 5–25 (ILLY…ATAF), 75–95 (FLFL…WMPL), 106–126 (LGLL…LGSG), 146–166 (ISYE…TGGF), 177–197 (TVWL…STLA), 228–248 (LFFL…VILF), 259–279 (QIST…FLWI), and 299–319 (FLPL…ATAS).

This sequence belongs to the complex I subunit 1 family.

Its subcellular location is the mitochondrion inner membrane. The catalysed reaction is a ubiquinone + NADH + 5 H(+)(in) = a ubiquinol + NAD(+) + 4 H(+)(out). Functionally, core subunit of the mitochondrial membrane respiratory chain NADH dehydrogenase (Complex I) that is believed to belong to the minimal assembly required for catalysis. Complex I functions in the transfer of electrons from NADH to the respiratory chain. The immediate electron acceptor for the enzyme is believed to be ubiquinone. The sequence is that of NADH-ubiquinone oxidoreductase chain 1 (MT-ND1) from Squalus acanthias (Spiny dogfish).